The primary structure comprises 45 residues: Non-specific lipid-transfer protein (45 aa).

This sequence belongs to the plant LTP family. In terms of tissue distribution, expressed in pollen.

In terms of biological role, plant non-specific lipid-transfer proteins transfer phospholipids as well as galactolipids across membranes. May play a role in wax or cutin deposition in the cell walls of expanding epidermal cells and certain secretory tissues. The protein is Non-specific lipid-transfer protein of Broussonetia papyrifera (Paper mulberry).